Consider the following 153-residue polypeptide: Deoxyuridine 5'-triphosphate nucleotidohydrolase (153 aa).

Residues 71-73 (RSG), N84, 88-90 (LID), and M98 each bind substrate.

The protein belongs to the dUTPase family. It depends on Mg(2+) as a cofactor.

It catalyses the reaction dUTP + H2O = dUMP + diphosphate + H(+). Its pathway is pyrimidine metabolism; dUMP biosynthesis; dUMP from dCTP (dUTP route): step 2/2. This enzyme is involved in nucleotide metabolism: it produces dUMP, the immediate precursor of thymidine nucleotides and it decreases the intracellular concentration of dUTP so that uracil cannot be incorporated into DNA. This chain is Deoxyuridine 5'-triphosphate nucleotidohydrolase, found in Wigglesworthia glossinidia brevipalpis.